A 403-amino-acid chain; its full sequence is MFACDELLLNASTIDATGLQLYNQAIVIRKGRIEWCGSEDQLPVHFQESAKSRKDCHGQLITPGLIDCHTHLVYAGHRAAEFRLKSQGVSYADIAKSGGGILSTVQMTRDASEEELIDQSLPRLLALKNEGVTTVEIKSGYGLDLQNELKMLRVARQLGDMAGVRVKTTFLGAHAVGPEFKGNSQAYVDFLCNEMLPAAKNMDLVDAVDVFCESIAFSIRQAEQIFQAAKNLNLPIKCHAEQLSNMGASSLAARYGALSCDHLEFLDENGALNMVKANTVAVLLPGAFYFLKEKQKPPVDLLRQVGVGMAIATDSNPGSSPTTSLLLMMSMACQFFSMSIPEVLSAVTYQASRALGMEKDIGSIEAGKIADLVLWSIKDSAALCYYFAYPLPHQTMVAGEWVS.

Fe(3+) contacts are provided by His-69 and His-71. His-69 and His-71 together coordinate Zn(2+). 4-imidazolone-5-propanoate-binding residues include Arg-78, Tyr-141, and His-174. Tyr-141 contacts N-formimidoyl-L-glutamate. Fe(3+) is bound at residue His-239. His-239 serves as a coordination point for Zn(2+). 4-imidazolone-5-propanoate is bound at residue Gln-242. Residue Asp-314 coordinates Fe(3+). A Zn(2+)-binding site is contributed by Asp-314. N-formimidoyl-L-glutamate-binding residues include Asn-316 and Gly-318. Residue Ser-319 participates in 4-imidazolone-5-propanoate binding.

This sequence belongs to the metallo-dependent hydrolases superfamily. HutI family. Zn(2+) is required as a cofactor. Requires Fe(3+) as cofactor.

It localises to the cytoplasm. It carries out the reaction 4-imidazolone-5-propanoate + H2O = N-formimidoyl-L-glutamate. It functions in the pathway amino-acid degradation; L-histidine degradation into L-glutamate; N-formimidoyl-L-glutamate from L-histidine: step 3/3. In terms of biological role, catalyzes the hydrolytic cleavage of the carbon-nitrogen bond in imidazolone-5-propanoate to yield N-formimidoyl-L-glutamate. It is the third step in the universal histidine degradation pathway. The protein is Imidazolonepropionase of Legionella pneumophila (strain Lens).